An 885-amino-acid chain; its full sequence is DNA mismatch repair protein MutS (885 aa).

Glycine 626–serine 633 contributes to the ATP binding site.

The protein belongs to the DNA mismatch repair MutS family.

Functionally, this protein is involved in the repair of mismatches in DNA. It is possible that it carries out the mismatch recognition step. This protein has a weak ATPase activity. The sequence is that of DNA mismatch repair protein MutS from Burkholderia ambifaria (strain MC40-6).